Here is a 681-residue protein sequence, read N- to C-terminus: Phosphomethylpyrimidine synthase (681 aa).

Residues 1 to 13 show a composition bias toward polar residues; sequence MSNNTTSLPAENS. The tract at residues 1–29 is disordered; it reads MSNNTTSLPAENSSHPRKGTPIRKKQREE. The span at 15-25 shows a compositional bias: basic residues; sequence HPRKGTPIRKK. Residues Asn-254, Met-283, Tyr-312, His-348, 368 to 370, 409 to 412, and Glu-448 each bind substrate; these read SRG and DGLR. A Zn(2+)-binding site is contributed by His-452. Tyr-475 contributes to the substrate binding site. His-516 is a binding site for Zn(2+). The [4Fe-4S] cluster site is built by Cys-596, Cys-599, and Cys-604. Over residues 658 to 667 the composition is skewed to basic and acidic residues; that stretch reads FRSRGSELYH. A disordered region spans residues 658-681; it reads FRSRGSELYHRPANLSAEANNEPT.

The protein belongs to the ThiC family. As to quaternary structure, homodimer. [4Fe-4S] cluster serves as cofactor.

The catalysed reaction is 5-amino-1-(5-phospho-beta-D-ribosyl)imidazole + S-adenosyl-L-methionine = 4-amino-2-methyl-5-(phosphooxymethyl)pyrimidine + CO + 5'-deoxyadenosine + formate + L-methionine + 3 H(+). Its pathway is cofactor biosynthesis; thiamine diphosphate biosynthesis. Functionally, catalyzes the synthesis of the hydroxymethylpyrimidine phosphate (HMP-P) moiety of thiamine from aminoimidazole ribotide (AIR) in a radical S-adenosyl-L-methionine (SAM)-dependent reaction. This chain is Phosphomethylpyrimidine synthase, found in Yersinia pseudotuberculosis serotype I (strain IP32953).